A 932-amino-acid polypeptide reads, in one-letter code: DNA mismatch repair protein MutS (932 aa).

Acidic residues predominate over residues 1 to 13 (MTTDTDTDVDAGT). A disordered region spans residues 1–26 (MTTDTDTDVDAGTDLEPQPEGPPEKM). An ATP-binding site is contributed by 648 to 655 (GPNMSGKS). The segment at 865-892 (NQQNQASDDDEIARSPRGADTNTDAGIN) is disordered.

This sequence belongs to the DNA mismatch repair MutS family.

Its function is as follows. This protein is involved in the repair of mismatches in DNA. It is possible that it carries out the mismatch recognition step. This protein has a weak ATPase activity. This is DNA mismatch repair protein MutS from Haloquadratum walsbyi (strain DSM 16790 / HBSQ001).